Here is a 117-residue protein sequence, read N- to C-terminus: Large ribosomal subunit protein bL19 (117 aa).

This sequence belongs to the bacterial ribosomal protein bL19 family.

Its function is as follows. This protein is located at the 30S-50S ribosomal subunit interface and may play a role in the structure and function of the aminoacyl-tRNA binding site. The chain is Large ribosomal subunit protein bL19 from Vibrio campbellii (strain ATCC BAA-1116).